The sequence spans 248 residues: Granulin (248 aa).

It belongs to the polyhedrin family.

In terms of biological role, component of the virus occlusion bodies, which are large proteinaceous structures, that protect the virus from the outside environment for extended periods until they are ingested by insect larvae. This chain is Granulin, found in Cydia pomonella (Codling moth).